Consider the following 346-residue polypeptide: Protein RecA (346 aa).

Residue 65–72 (GPESSGKT) coordinates ATP.

Belongs to the RecA family.

Its subcellular location is the cytoplasm. Functionally, can catalyze the hydrolysis of ATP in the presence of single-stranded DNA, the ATP-dependent uptake of single-stranded DNA by duplex DNA, and the ATP-dependent hybridization of homologous single-stranded DNAs. It interacts with LexA causing its activation and leading to its autocatalytic cleavage. In Enterococcus hirae (strain ATCC 9790 / DSM 20160 / JCM 8729 / LMG 6399 / NBRC 3181 / NCIMB 6459 / NCDO 1258 / NCTC 12367 / WDCM 00089 / R), this protein is Protein RecA.